The sequence spans 247 residues: Geranylgeranylglyceryl phosphate synthase (247 aa).

Mg(2+) contacts are provided by aspartate 23 and serine 52. Residues 171–177, 203–204, and 225–226 contribute to the sn-glycerol 1-phosphate site; these read YLEAGSG, GG, and GT.

Belongs to the GGGP/HepGP synthase family. Group II subfamily. It depends on Mg(2+) as a cofactor.

It is found in the cytoplasm. The catalysed reaction is sn-glycerol 1-phosphate + (2E,6E,10E)-geranylgeranyl diphosphate = sn-3-O-(geranylgeranyl)glycerol 1-phosphate + diphosphate. It participates in membrane lipid metabolism; glycerophospholipid metabolism. Its function is as follows. Prenyltransferase that catalyzes the transfer of the geranylgeranyl moiety of geranylgeranyl diphosphate (GGPP) to the C3 hydroxyl of sn-glycerol-1-phosphate (G1P). This reaction is the first ether-bond-formation step in the biosynthesis of archaeal membrane lipids. In Methanococcoides burtonii (strain DSM 6242 / NBRC 107633 / OCM 468 / ACE-M), this protein is Geranylgeranylglyceryl phosphate synthase.